Reading from the N-terminus, the 503-residue chain is Glutamate--tRNA ligase (503 aa).

The 'HIGH' region signature appears at 12-22 (PSPTGYLHVGG). The 'KMSKS' region signature appears at 259–263 (KLSKR). Position 262 (Lys-262) interacts with ATP.

It belongs to the class-I aminoacyl-tRNA synthetase family. Glutamate--tRNA ligase type 1 subfamily. Monomer.

The protein resides in the cytoplasm. It carries out the reaction tRNA(Glu) + L-glutamate + ATP = L-glutamyl-tRNA(Glu) + AMP + diphosphate. Catalyzes the attachment of glutamate to tRNA(Glu) in a two-step reaction: glutamate is first activated by ATP to form Glu-AMP and then transferred to the acceptor end of tRNA(Glu). In Chloroherpeton thalassium (strain ATCC 35110 / GB-78), this protein is Glutamate--tRNA ligase.